The primary structure comprises 75 residues: Protease B inhibitor 1 (75 aa).

Thr-74 bears the Phosphothreonine mark.

The protein belongs to the protease inhibitor I9 family. Part of the heterodimeric LMA1 complex together with the thioredoxin II/TRX2. LMA1 binds to the ATPase SEC18.

It localises to the cytoplasm. The protein resides in the nucleus. Its function is as follows. Cytosolic inhibitor of vacuolar proteinase B (yscB), probably regulating protease B activity during limited proteolysis. PBI2 is a component of the LMA1 complex, which is involved in the facilitation of vesicle fusion such as homotypic vacuole and ER-derived COPII vesicle fusion with the Golgi. This Saccharomyces cerevisiae (Baker's yeast) protein is Protease B inhibitor 1 (PBI2).